The chain runs to 200 residues: dITP/XTP pyrophosphatase (200 aa).

Position 8–13 (8–13 (TGNQGK)) interacts with substrate. Aspartate 69 (proton acceptor) is an active-site residue. Position 69 (aspartate 69) interacts with Mg(2+). Substrate is bound by residues serine 70, 154–157 (FGYD), lysine 177, and 182–183 (HR).

This sequence belongs to the HAM1 NTPase family. As to quaternary structure, homodimer. It depends on Mg(2+) as a cofactor.

It carries out the reaction XTP + H2O = XMP + diphosphate + H(+). The catalysed reaction is dITP + H2O = dIMP + diphosphate + H(+). It catalyses the reaction ITP + H2O = IMP + diphosphate + H(+). In terms of biological role, pyrophosphatase that catalyzes the hydrolysis of nucleoside triphosphates to their monophosphate derivatives, with a high preference for the non-canonical purine nucleotides XTP (xanthosine triphosphate), dITP (deoxyinosine triphosphate) and ITP. Seems to function as a house-cleaning enzyme that removes non-canonical purine nucleotides from the nucleotide pool, thus preventing their incorporation into DNA/RNA and avoiding chromosomal lesions. This Vibrio parahaemolyticus serotype O3:K6 (strain RIMD 2210633) protein is dITP/XTP pyrophosphatase.